Consider the following 189-residue polypeptide: Small ribosomal subunit protein uS5 (189 aa).

The S5 DRBM domain occupies 22 to 85 (FVDKLVAINR…ESAKRDLIFV (64 aa)).

It belongs to the universal ribosomal protein uS5 family. In terms of assembly, part of the 30S ribosomal subunit. Contacts proteins S4 and S8.

With S4 and S12 plays an important role in translational accuracy. Its function is as follows. Located at the back of the 30S subunit body where it stabilizes the conformation of the head with respect to the body. The protein is Small ribosomal subunit protein uS5 of Allorhizobium ampelinum (strain ATCC BAA-846 / DSM 112012 / S4) (Agrobacterium vitis (strain S4)).